The chain runs to 59 residues: Large ribosomal subunit protein uL30 (59 aa).

The protein belongs to the universal ribosomal protein uL30 family. As to quaternary structure, part of the 50S ribosomal subunit.

This chain is Large ribosomal subunit protein uL30, found in Haemophilus influenzae (strain 86-028NP).